We begin with the raw amino-acid sequence, 399 residues long: Nicotinate phosphoribosyltransferase 1 (399 aa).

Phosphohistidine; by autocatalysis is present on H224.

Belongs to the NAPRTase family. In terms of processing, transiently phosphorylated on a His residue during the reaction cycle. Phosphorylation strongly increases the affinity for substrates and increases the rate of nicotinate D-ribonucleotide production. Dephosphorylation regenerates the low-affinity form of the enzyme, leading to product release.

It carries out the reaction nicotinate + 5-phospho-alpha-D-ribose 1-diphosphate + ATP + H2O = nicotinate beta-D-ribonucleotide + ADP + phosphate + diphosphate. It functions in the pathway cofactor biosynthesis; NAD(+) biosynthesis; nicotinate D-ribonucleotide from nicotinate: step 1/1. In terms of biological role, catalyzes the synthesis of beta-nicotinate D-ribonucleotide from nicotinate and 5-phospho-D-ribose 1-phosphate at the expense of ATP. This Pseudomonas aeruginosa (strain ATCC 15692 / DSM 22644 / CIP 104116 / JCM 14847 / LMG 12228 / 1C / PRS 101 / PAO1) protein is Nicotinate phosphoribosyltransferase 1.